An 812-amino-acid chain; its full sequence is Chromosome alignment-maintaining phosphoprotein 1 (812 aa).

Position 1 is an N-acetylmethionine (Met-1). A compositionally biased stretch (basic and acidic residues) spans 86–105 (ASPDKWNDKPKNQLNKETDP). Disordered regions lie at residues 86 to 124 (ASPDKWNDKPKNQLNKETDPVKSPPLPEHQKIPCNSAEP) and 136 to 546 (KLGS…PEAR). Ser-87, Ser-108, Ser-173, Ser-184, Ser-204, Ser-214, and Ser-217 each carry phosphoserine. Residues 202–213 (VPSPEPQKPAPV) are compositionally biased toward pro residues. Positions 220 to 233 (ATLSNPKPQKQSHF) are enriched in polar residues. Phosphoserine is present on residues Ser-244, Ser-247, Ser-253, Ser-264, Ser-275, Ser-282, Ser-286, Ser-297, Ser-308, Ser-319, Ser-344, Ser-355, Ser-376, Ser-382, and Ser-386. A mediates interaction with MAD2L2 region spans residues 271-490 (ARTTSPEPRK…KSSFFIEPQK (220 aa)). A compositionally biased stretch (pro residues) spans 284 to 297 (SESPEPWKPFPAVS). The segment covering 336–361 (PAKPAPSVSPGPWKPIPSVSPGPWKP) has biased composition (pro residues). The span at 363 to 392 (PSVSSASWKSSSVSPSSWKSPPASPESWKS) shows a compositional bias: low complexity. At Thr-403 the chain carries Phosphothreonine. Ser-405, Ser-416, Ser-427, Ser-432, Ser-436, Ser-443, Ser-445, and Ser-452 each carry phosphoserine. A mediates localization to the spindle and the kinetochore and is required for the attachment of spindle microtubules to the kinetochore region spans residues 451–590 (LSPDQRKTSP…ELQIDAIDDQ (140 aa)). Position 458 is a phosphothreonine (Thr-458). Residues Ser-459, Ser-462, Ser-472, and Ser-476 each carry the phosphoserine modification. At Lys-490 the chain carries N6-acetyllysine; alternate. A Glycyl lysine isopeptide (Lys-Gly) (interchain with G-Cter in SUMO2); alternate cross-link involves residue Lys-490. Residues 499–512 (PGPSGPSESPKAAS) are compositionally biased toward low complexity. 3 positions are modified to phosphoserine: Ser-507, Ser-512, and Ser-542. Lys-565 participates in a covalent cross-link: Glycyl lysine isopeptide (Lys-Gly) (interchain with G-Cter in SUMO2). A phosphoserine mark is found at Ser-572 and Ser-603. A mediates localization to the chromosome and the spindle and negatively regulates chromosome alignment region spans residues 591–812 (KCDILVQEEL…LEPPLEEQQI (222 aa)). Residue Lys-606 forms a Glycyl lysine isopeptide (Lys-Gly) (interchain with G-Cter in SUMO2) linkage. Residues Ser-615, Ser-626, Ser-627, and Ser-632 each carry the phosphoserine modification. A Glycyl lysine isopeptide (Lys-Gly) (interchain with G-Cter in SUMO2) cross-link involves residue Lys-638. Phosphoserine is present on residues Ser-651, Ser-652, and Ser-653. A Glycyl lysine isopeptide (Lys-Gly) (interchain with G-Cter in SUMO2) cross-link involves residue Lys-670. The residue at position 675 (Ser-675) is a Phosphoserine. Residue Lys-689 forms a Glycyl lysine isopeptide (Lys-Gly) (interchain with G-Cter in SUMO2) linkage. A Phosphoserine modification is found at Ser-736. A C2H2-type zinc finger spans residues 738 to 760 (YKCTICGKAFLLESLLKNHVAAH).

As to quaternary structure, interacts with MAD2L2. Interacts with POGZ, CBX1, CBX3 and CBX5. Post-translationally, phosphorylated by CDK1. Mitotic phosphorylation is required for the attachment of spindle microtubules to the kinetochore.

It localises to the nucleus. It is found in the chromosome. The protein resides in the centromere. Its subcellular location is the kinetochore. The protein localises to the cytoplasm. It localises to the cytoskeleton. It is found in the spindle. In terms of biological role, required for proper alignment of chromosomes at metaphase and their accurate segregation during mitosis. Involved in the maintenance of spindle microtubules attachment to the kinetochore during sister chromatid biorientation. May recruit CENPE and CENPF to the kinetochore. In Homo sapiens (Human), this protein is Chromosome alignment-maintaining phosphoprotein 1 (CHAMP1).